Here is a 242-residue protein sequence, read N- to C-terminus: Transcription factor bHLH100 (242 aa).

Residues 61 to 113 form the bHLH domain; it reads MKKLNHNASERERRKKINTMFSSLRSCLPPTNQTKKLSVSATVSQALKYIPEL.

Homodimer. In terms of tissue distribution, expressed constitutively in roots, leaves, and stems.

Its subcellular location is the nucleus. Functionally, plays a role in metal homeostasis. Confers tolerance to high zinc (Zn) and nickel (Ni). The polypeptide is Transcription factor bHLH100 (BHLH100) (Arabidopsis thaliana (Mouse-ear cress)).